The following is a 355-amino-acid chain: Guanine nucleotide-binding protein G(i) subunit alpha-2 (355 aa).

The N-myristoyl glycine moiety is linked to residue Gly-2. Cys-3 carries the S-palmitoyl cysteine lipid modification. In terms of domain architecture, G-alpha spans 32-355 (REVKLLLLGA…KNNLKDCGLF (324 aa)). Residues 35–48 (KLLLLGAGESGKST) form a G1 motif region. GTP-binding positions include 40–47 (GAGESGKS), 176–182 (LRTRVKT), 201–205 (DVGGQ), 270–273 (NKKD), and Ala-327. The Mg(2+) site is built by Ser-47 and Thr-182. Residues 174-182 (DVLRTRVKT) form a G2 motif region. The interval 197–206 (FKMFDVGGQR) is G3 motif. Positions 266-273 (ILFLNKKD) are G4 motif. A G5 motif region spans residues 325 to 330 (TCATDT).

The protein belongs to the G-alpha family. G(i/o/t/z) subfamily. G proteins are composed of 3 units; alpha, beta and gamma. The alpha chain contains the guanine nucleotide binding site.

Its subcellular location is the cytoplasm. It localises to the cytoskeleton. The protein resides in the microtubule organizing center. The protein localises to the centrosome. It is found in the cell membrane. Functionally, guanine nucleotide-binding proteins (G proteins) are involved as modulators or transducers in various transmembrane signaling systems. The G(i) proteins are involved in hormonal regulation of adenylate cyclase: they inhibit the cyclase in response to beta-adrenergic stimuli. May play a role in cell division. This Oryzias latipes (Japanese rice fish) protein is Guanine nucleotide-binding protein G(i) subunit alpha-2 (gnai2).